Reading from the N-terminus, the 338-residue chain is Fructose-1,6-bisphosphatase 1 (338 aa).

At A2 the chain carries N-acetylalanine. Residues 18 to 22 (VMEQG) and 28 to 32 (TGELT) contribute to the AMP site. Mg(2+) contacts are provided by D69 and E98. Position 113–114 (113–114 (KY)) interacts with AMP. Mg(2+)-binding residues include D119, L121, and D122. 122–125 (DGSS) provides a ligand contact to substrate. Residue R141 participates in AMP binding. An N6-succinyllysine modification is found at K151. Substrate contacts are provided by residues 213-216 (NEGY), 244-249 (RYVGSM), Y265, and 275-277 (KLR). Phosphotyrosine is present on residues Y216, Y245, and Y265. E281 is a binding site for Mg(2+).

It belongs to the FBPase class 1 family. As to quaternary structure, homotetramer. The cofactor is Mg(2+). Detected in pancreatic beta-cell lines MIN6 and beta-TC and in liver (at protein level). Preferentially expressed in liver, with lower levels detected in pancreatic islets and intestine, and very low levels in blood, muscle, brain and spleen.

The catalysed reaction is beta-D-fructose 1,6-bisphosphate + H2O = beta-D-fructose 6-phosphate + phosphate. It functions in the pathway carbohydrate biosynthesis; gluconeogenesis. Its activity is regulated as follows. Subject to complex allosteric regulation. The enzyme can assume an active R-state, or an inactive T-state. Intermediate conformations may exist. AMP acts as an allosteric inhibitor. AMP binding affects the turnover of bound substrate and not the affinity for substrate. Fructose 2,6-bisphosphate acts as a competitive inhibitor. Fructose 2,6-bisphosphate and AMP have synergistic effects. Functionally, catalyzes the hydrolysis of fructose 1,6-bisphosphate to fructose 6-phosphate in the presence of divalent cations, acting as a rate-limiting enzyme in gluconeogenesis. Plays a role in regulating glucose sensing and insulin secretion of pancreatic beta-cells. Appears to modulate glycerol gluconeogenesis in liver. Important regulator of appetite and adiposity; increased expression of the protein in liver after nutrient excess increases circulating satiety hormones and reduces appetite-stimulating neuropeptides and thus seems to provide a feedback mechanism to limit weight gain. The protein is Fructose-1,6-bisphosphatase 1 (Fbp1) of Mus musculus (Mouse).